Reading from the N-terminus, the 194-residue chain is MSMYNYVKEAWKVPANSYVKELQWARMQDWRKEPSVLRIERPTRIDRARNLGYKAKQGIVVVRVSVRRGGLRKPRPKHSKKPATLGINKITMAKSIQRIAEERAAKRYPNMEVLNSYWVGQDGKQKWYEIILVDPCHPSIKNDKSYSWLSTGNHKGRANRGLTSAGKKGRGLMYKGKGAEKARPGVRANGKKTK.

Residues 158–194 (ANRGLTSAGKKGRGLMYKGKGAEKARPGVRANGKKTK) form a disordered region.

The protein belongs to the eukaryotic ribosomal protein eL15 family.

The sequence is that of Large ribosomal subunit protein eL15 from Methanococcus maripaludis (strain DSM 14266 / JCM 13030 / NBRC 101832 / S2 / LL).